A 74-amino-acid chain; its full sequence is DNA gyrase inhibitor YacG (74 aa).

Cysteine 7, cysteine 10, cysteine 26, and cysteine 30 together coordinate Zn(2+).

Belongs to the DNA gyrase inhibitor YacG family. As to quaternary structure, interacts with GyrB. It depends on Zn(2+) as a cofactor.

Its function is as follows. Inhibits all the catalytic activities of DNA gyrase by preventing its interaction with DNA. Acts by binding directly to the C-terminal domain of GyrB, which probably disrupts DNA binding by the gyrase. In Shewanella denitrificans (strain OS217 / ATCC BAA-1090 / DSM 15013), this protein is DNA gyrase inhibitor YacG.